The chain runs to 212 residues: Methylthioribulose-1-phosphate dehydratase (212 aa).

Positions 97 and 99 each coordinate Zn(2+).

Belongs to the aldolase class II family. MtnB subfamily. In terms of assembly, homotetramer. Requires Zn(2+) as cofactor.

It carries out the reaction 5-(methylsulfanyl)-D-ribulose 1-phosphate = 5-methylsulfanyl-2,3-dioxopentyl phosphate + H2O. It participates in amino-acid biosynthesis; L-methionine biosynthesis via salvage pathway; L-methionine from S-methyl-5-thio-alpha-D-ribose 1-phosphate: step 2/6. Functionally, catalyzes the dehydration of methylthioribulose-1-phosphate (MTRu-1-P) into 2,3-diketo-5-methylthiopentyl-1-phosphate (DK-MTP-1-P). The sequence is that of Methylthioribulose-1-phosphate dehydratase from Bacillus cereus (strain ATCC 10987 / NRS 248).